The following is a 1350-amino-acid chain: uncharacterized protein (1350 aa).

Disordered stretches follow at residues 348 to 371 (SLVGAPSPSERVMKRKSERPLDDS) and 923 to 944 (SKMEGGERDATGSSMDTVRGTG). Positions 923–932 (SKMEGGERDA) are enriched in basic and acidic residues.

This is an uncharacterized protein from Ictalurid herpesvirus 1 (strain Auburn) (IcHV-1).